The chain runs to 101 residues: Integration host factor subunit alpha (101 aa).

Belongs to the bacterial histone-like protein family. Heterodimer of an alpha and a beta chain.

Functionally, this protein is one of the two subunits of integration host factor, a specific DNA-binding protein that functions in genetic recombination as well as in transcriptional and translational control. In Dinoroseobacter shibae (strain DSM 16493 / NCIMB 14021 / DFL 12), this protein is Integration host factor subunit alpha.